Reading from the N-terminus, the 270-residue chain is Energy-coupling factor transporter transmembrane protein EcfT (270 aa).

Helical transmembrane passes span 36–56 (LFIV…LISI), 72–92 (PIFI…GGAN), 108–128 (LIMA…TSLL), and 248–268 (FIAS…RIWW).

Belongs to the energy-coupling factor EcfT family. Forms a stable energy-coupling factor (ECF) transporter complex composed of 2 membrane-embedded substrate-binding proteins (S component), 2 ATP-binding proteins (A component) and 2 transmembrane proteins (T component). May be able to interact with more than 1 S component at a time.

Its subcellular location is the cell membrane. Functionally, transmembrane (T) component of an energy-coupling factor (ECF) ABC-transporter complex. Unlike classic ABC transporters this ECF transporter provides the energy necessary to transport a number of different substrates. In Clostridium kluyveri (strain ATCC 8527 / DSM 555 / NBRC 12016 / NCIMB 10680 / K1), this protein is Energy-coupling factor transporter transmembrane protein EcfT.